Here is a 234-residue protein sequence, read N- to C-terminus: Thymidine kinase, cytosolic (234 aa).

At serine 13 the chain carries Phosphoserine. ATP contacts are provided by residues glycine 26–serine 33, aspartate 58–arginine 60, and aspartate 97–glutamine 100. The active-site Proton acceptor is glutamate 98. A substrate-binding site is contributed by phenylalanine 128. The Zn(2+) site is built by cysteine 153 and cysteine 156. Substrate-binding positions include valine 172 to glycine 176 and tyrosine 181. Zn(2+) is bound by residues cysteine 185 and cysteine 188. A KEN box motif is present at residues lysine 203 to asparagine 205.

Belongs to the thymidine kinase family. Homotetramer. Tetramerization from dimerization is induced by ATP and increases catalytic efficiency due to a high affinity for thymidine. Tetramerization is inhibited by phosphorylation at Ser-13. Interacts (via the KEN box) with FZR1. In terms of processing, phosphorylated on Ser-13 in mitosis. Phosphorylation of Ser-13 by CDK1 during mitosis reduces homotetramerization and catalytic efficiency when DNA replication is complete and intracellular TK1 is still present at a high level. Polyubiquitinated. Postmitosis, ubiquitination leads to proteasomal degradation. The KEN box sequence located at the C-terminal region targets for degradation by the anaphase promoting complex (APC/C) activated and rate-limited by FZR1.

It localises to the cytoplasm. The enzyme catalyses thymidine + ATP = dTMP + ADP + H(+). In terms of biological role, cell-cycle-regulated enzyme of importance in nucleotide metabolism. Catalyzes the first enzymatic step in the salvage pathway converting thymidine into thymidine monophosphate. Transcriptional regulation limits expression to the S phase of the cell cycle and transient expression coincides with the oscillation in the intracellular dTTP concentration. In Cricetulus griseus (Chinese hamster), this protein is Thymidine kinase, cytosolic (TK1).